Reading from the N-terminus, the 53-residue chain is uncharacterized protein (53 aa).

The helical transmembrane segment at 18 to 38 threads the bilayer; it reads FLFFIFYFLFFFIFFTVFGNL.

It localises to the membrane. This is an uncharacterized protein from Dictyostelium discoideum (Social amoeba).